Here is a 479-residue protein sequence, read N- to C-terminus: Anaerobic nitric oxide reductase flavorubredoxin (479 aa).

Positions 30–210 (LRGSSYNSYL…PFSRLVTPKI (181 aa)) are zinc metallo-hydrolase. Residues His-79, Glu-81, Asp-83, His-147, Asp-166, and His-227 each contribute to the Fe cation site. The region spanning 254 to 393 (ITIFYDTMSN…LCRQHGRDIA (140 aa)) is the Flavodoxin-like domain. FMN contacts are provided by residues 260–264 (TMSNN) and 342–369 (AFGS…EMSL). Residues 423 to 474 (GPKMQCSVCQWIYDPALGEPLQDVAPGTPWSDVPDNFLCPECSLGKDVFDVL) form the Rubredoxin-like domain. The Fe cation site is built by Cys-428, Cys-431, Cys-461, and Cys-464.

This sequence in the N-terminal section; belongs to the zinc metallo-hydrolase group 3 family. As to quaternary structure, homotetramer. Fe cation is required as a cofactor. It depends on FMN as a cofactor.

The protein resides in the cytoplasm. Its pathway is nitrogen metabolism; nitric oxide reduction. In terms of biological role, anaerobic nitric oxide reductase; uses NADH to detoxify nitric oxide (NO), protecting several 4Fe-4S NO-sensitive enzymes. Has at least 2 reductase partners, only one of which (NorW, flavorubredoxin reductase) has been identified. NO probably binds to the di-iron center; electrons enter from the NorW at rubredoxin and are transferred sequentially to the FMN center and the di-iron center. Also able to function as an aerobic oxygen reductase. The protein is Anaerobic nitric oxide reductase flavorubredoxin of Salmonella paratyphi B (strain ATCC BAA-1250 / SPB7).